Here is a 447-residue protein sequence, read N- to C-terminus: Methylenetetrahydrofolate--tRNA-(uracil-5-)-methyltransferase TrmFO (447 aa).

Residue 9–14 coordinates FAD; it reads GGGLAG.

It belongs to the MnmG family. TrmFO subfamily. FAD is required as a cofactor.

Its subcellular location is the cytoplasm. The catalysed reaction is uridine(54) in tRNA + (6R)-5,10-methylene-5,6,7,8-tetrahydrofolate + NADH + H(+) = 5-methyluridine(54) in tRNA + (6S)-5,6,7,8-tetrahydrofolate + NAD(+). It catalyses the reaction uridine(54) in tRNA + (6R)-5,10-methylene-5,6,7,8-tetrahydrofolate + NADPH + H(+) = 5-methyluridine(54) in tRNA + (6S)-5,6,7,8-tetrahydrofolate + NADP(+). Catalyzes the folate-dependent formation of 5-methyl-uridine at position 54 (M-5-U54) in all tRNAs. The chain is Methylenetetrahydrofolate--tRNA-(uracil-5-)-methyltransferase TrmFO from Paramagnetospirillum magneticum (strain ATCC 700264 / AMB-1) (Magnetospirillum magneticum).